Consider the following 472-residue polypeptide: Ribosomal RNA small subunit methyltransferase F (472 aa).

Residues 123-129 (AAAPGSK), Glu-147, Asp-174, and Asp-192 each bind S-adenosyl-L-methionine. The active-site Nucleophile is Cys-245.

This sequence belongs to the class I-like SAM-binding methyltransferase superfamily. RsmB/NOP family.

The protein resides in the cytoplasm. The enzyme catalyses cytidine(1407) in 16S rRNA + S-adenosyl-L-methionine = 5-methylcytidine(1407) in 16S rRNA + S-adenosyl-L-homocysteine + H(+). Its function is as follows. Specifically methylates the cytosine at position 1407 (m5C1407) of 16S rRNA. The polypeptide is Ribosomal RNA small subunit methyltransferase F (Vibrio vulnificus (strain CMCP6)).